The primary structure comprises 1580 residues: Adhesion G protein-coupled receptor L3 (1580 aa).

Positions 1–19 (MWPSQLLVFMMLLAPIIHG) are cleaved as a signal peptide. Residues 20 to 949 (GKHSERHPAL…VHDLLLDVIT (930 aa)) lie on the Extracellular side of the membrane. The tract at residues 23 to 81 (SERHPALASPLRHAERGPGGALPPRHLLQQPAAERATAHRGPGPRGATRGVRGPGAHGA) is disordered. The SUEL-type lectin domain occupies 103–192 (SCESYPIELR…KYLEVQYECV (90 aa)). 5 disulfides stabilise this stretch: Cys104–Cys134, Cys113–Cys191, Cys146–Cys178, Cys159–Cys165, and Cys203–Cys385. The N-linked (GlcNAc...) asparagine glycan is linked to Asn161. The 260-residue stretch at 202 to 461 (LCPGLLKGVY…VVKYSLDFGP (260 aa)) folds into the Olfactomedin-like domain. An interaction with FLRT3 region spans residues 317 to 347 (YHDTSPYRWGGKSDIDLAVDENGLWVIYATE). Ca(2+)-binding residues include Asp332, Asn380, Ala381, and Val435. Residues 494-540 (EISTTGPLGTGSTTTSTTLRTTTWSPGRSTTPSVSGRRNRSTSTPSP) are disordered. The span at 496–521 (STTGPLGTGSTTTSTTLRTTTWSPGR) shows a compositional bias: low complexity. The segment covering 522-539 (STTPSVSGRRNRSTSTPS) has biased composition (polar residues). N-linked (GlcNAc...) asparagine glycans are attached at residues Asn532, Asn617, Asn827, Asn840, Asn885, and Asn911. A GAIN-B domain is found at 756 to 935 (DIVRENTDNI…AVLMAHVEVK (180 aa)). Cystine bridges form between Cys886–Cys917 and Cys905–Cys919. The tract at residues 886 to 935 (CSFWSYSKRTMTGYWSTQGCRLLTTNKTHTTCSCNHLTNFAVLMAHVEVK) is GPS. A stachel region spans residues 923–939 (TNFAVLMAHVEVKHSDA). The helical transmembrane segment at 950–970 (WVGILLSLVCLLICIFTFCFF) threads the bilayer. The Cytoplasmic portion of the chain corresponds to 971–978 (RGLQSDRN). Residues 979–999 (TIHKNLCISLFVAELLFLIGI) traverse the membrane as a helical segment. N-linked (GlcNAc...) asparagine glycosylation is present at Asn1000. Topologically, residues 1000-1007 (NRTDQPIA) are extracellular. Residues 1008 to 1028 (CAVFAALLHFFFLAAFTWMFL) form a helical membrane-spanning segment. Residues 1029 to 1050 (EGVQLYIMLVEVFESEHSRRKY) lie on the Cytoplasmic side of the membrane. The chain crosses the membrane as a helical span at residues 1051 to 1071 (FYLVGYGMPALIVAVSAAVDY). At 1072-1088 (RSYGTDKVCWLRLDTYF) the chain is on the extracellular side. The helical transmembrane segment at 1089-1109 (IWSFIGPATLIIMLNVIFLGI) threads the bilayer. Topologically, residues 1110-1142 (ALYKMFHHTAILKPESGCLDNINYEDNRPFIKS) are cytoplasmic. The helical transmembrane segment at 1143 to 1163 (WVIGAIALLCLLGLTWAFGLM) threads the bilayer. Topologically, residues 1164–1169 (YINEST) are extracellular. Asn1166 carries N-linked (GlcNAc...) asparagine glycosylation. The chain crosses the membrane as a helical span at residues 1170–1190 (VIMAYLFTIFNSLQGMFIFIF). At 1191–1580 (HCVLQKKVRK…KGPAHLVTSL (390 aa)) the chain is on the cytoplasmic side. Residues 1213–1238 (GRSTESSIGSGKTSGSRTPGRYSTGS) are disordered. Phosphoserine is present on Ser1254. Residues 1555–1580 (FIVPPNKDGTPPEGSSKGPAHLVTSL) form a disordered region. The PDZ-binding signature appears at 1575–1580 (HLVTSL).

It belongs to the G-protein coupled receptor 2 family. LN-TM7 subfamily. Heterodimer of 2 chains generated by proteolytic processing; the large extracellular N-terminal fragment and the membrane-bound C-terminal fragment predominantly remain associated and non-covalently linked. Interacts (via olfactomedin-like domain) with FLRT1 (via extracellular domain). Interacts (via olfactomedin-like domain) with FLRT2 (via extracellular domain). Interacts (via olfactomedin-like domain) with FLRT3 (via extracellular domain); the interaction is direct. Interacts (via extracellular domain) with TENM1. Interacts (via extracellular domain) with TENM2. Interacts (via extracellular domain) with TENM3. Identified in a complex with FLRT3 and UNC5B; does not interact with UNC5B by itself. Identified in a complex with FLRT3 and UNC5D; does not interact with UNC5D by itself. As to quaternary structure, interacts (via PDZ-binding motif) with SHANK3. Interacts (via PDZ-binding motif) with DLG4. Autoproteolytically processed at the GPS region of the GAIN-B domain; this cleavage modulates receptor activity. Brain-specific distribution but low levels are also detected in lung and spleen.

The protein localises to the cell membrane. Its subcellular location is the postsynaptic cell membrane. It is found in the cell projection. The protein resides in the axon. It localises to the cell junction. With respect to regulation, forms a heterodimer of 2 chains generated by proteolytic processing that remain associated through non-covalent interactions mediated by the GAIN-B domain. In the inactivated receptor, the Stachel sequence (also named stalk) is embedded in the GAIN-B domain, where it adopts a beta-strand conformation. On activation, the Stachel moves into the 7 transmembrane region and adopts a twisted hook-shaped configuration that forms contacts within the receptor, leading to coupling of a G-alpha protein, which activates signaling. The cleaved GAIN-B and N-terminal domains can then dissociate from the rest of the receptor. Its function is as follows. Orphan adhesion G-protein coupled receptor (aGPCR), which mediates synapse specificity. Ligand binding causes a conformation change that triggers signaling via guanine nucleotide-binding proteins (G proteins) and modulates the activity of downstream effectors. ADGRL3 is coupled with different classes of G alpha proteins, such as G(12)/G(13), G(s), G(i) or G(q), depending on the context. Coupling to G(12)/G(13) G proteins, which mediates the activation Rho small GTPases is the most efficient. Following G-protein coupled receptor activation, associates with cell adhesion molecules that are expressed at the surface of adjacent cells to direct synapse specificity. Specifically mediates the establishment of Schaffer-collateral synapses formed by CA3-region axons on CA1-region pyramidal neurons in the hippocampus. Localizes to postsynaptic spines in excitatory synapses in the S.oriens and S.radiatum and interacts with presynaptic cell adhesion molecules FLRT3 and TENM2, promoting synapse formation. Plays a role in the development of glutamatergic synapses in the cortex. Important in determining the connectivity rates between the principal neurons in the cortex. Functionally, orphan adhesion G-protein coupled receptor (aGPCR), which mediates synapse specificity. Ligand binding causes a conformation change that triggers signaling via guanine nucleotide-binding proteins (G proteins) and modulates the activity of downstream effectors, such as adenylate cyclase. Isoform 1 is specifically coupled to G(s) G proteins and mediates activation of adenylate cyclase activity. Following G-protein coupled receptor activation, undergoes liquid-liquid phase transition, associates with (1) cell adhesion molecules that are expressed at the surface of adjacent cells, as well as (2) PDZ-containing proteins, such as SHANK3 and DLG4, in the cytoplasm to direct synapse formation. This chain is Adhesion G protein-coupled receptor L3, found in Bos taurus (Bovine).